The sequence spans 603 residues: Adenine deaminase (603 aa).

This sequence belongs to the metallo-dependent hydrolases superfamily. Adenine deaminase family. Homodimer. Mn(2+) serves as cofactor.

It carries out the reaction adenine + H2O + H(+) = hypoxanthine + NH4(+). This chain is Adenine deaminase, found in Klebsiella pneumoniae (strain 342).